Reading from the N-terminus, the 848-residue chain is Protein NETWORKED 2C (848 aa).

In terms of domain architecture, NAB spans 10–90 (YSWWWASHVR…ERYDHISKEL (81 aa)). The segment at 108-141 (FAMNEDDDDDAPVSPRHHKNKTSNKNVPKVPDLP) is disordered. Coiled coils occupy residues 172–204 (LSKT…SYEN), 241–278 (EAQI…SRKQ), 305–454 (SEKE…KATN), and 752–797 (AKFE…SEEF).

The protein belongs to the NET family.

Plant-specific actin binding protein. May be part of a membrane-cytoskeletal adapter complex. This is Protein NETWORKED 2C from Arabidopsis thaliana (Mouse-ear cress).